The sequence spans 154 residues: Fibroblast growth factor 2 (154 aa).

The propeptide occupies Met-1–Leu-9. Asn-35 provides a ligand contact to heparin. At Tyr-81 the chain carries Phosphotyrosine; by TEC. Lys-94 is covalently cross-linked (Glycyl lysine isopeptide (Lys-Gly) (interchain with G-Cter in SUMO1)). The segment at Lys-127–Lys-143 is heparin-binding.

Belongs to the heparin-binding growth factors family. In terms of assembly, monomer. Homodimer. Interacts with FGFR1, FGFR2, FGFR3 and FGFR4. Affinity between fibroblast growth factors (FGFs) and their receptors is increased by heparan sulfate glycosaminoglycans that function as coreceptors. Interacts with CSPG4, FGFBP1 and TEC. Found in a complex with FGFBP1, FGF1 and FGF2. Interacts with FGFBP3. Interacts with integrin ITGAV:ITGB3; the interaction is required for FGF2 signaling. Interacts with SNORC (via the extracellular domain). Interacts with glypican GPC3. Phosphorylation at Tyr-81 regulates FGF2 unconventional secretion.

It is found in the secreted. The protein resides in the nucleus. Its function is as follows. Acts as a ligand for FGFR1, FGFR2, FGFR3 and FGFR4. Also acts as an integrin ligand which is required for FGF2 signaling. Binds to integrin ITGAV:ITGB3. Plays an important role in the regulation of cell survival, cell division, cell differentiation and cell migration. Functions as a potent mitogen in vitro. Can induce angiogenesis. Mediates phosphorylation of ERK1/2 and thereby promotes retinal lens fiber differentiation. The polypeptide is Fibroblast growth factor 2 (Fgf2) (Mus musculus (Mouse)).